The primary structure comprises 249 residues: Segregation and condensation protein A (249 aa).

It belongs to the ScpA family. Component of a cohesin-like complex composed of ScpA, ScpB and the Smc homodimer, in which ScpA and ScpB bind to the head domain of Smc. The presence of the three proteins is required for the association of the complex with DNA.

It is found in the cytoplasm. In terms of biological role, participates in chromosomal partition during cell division. May act via the formation of a condensin-like complex containing Smc and ScpB that pull DNA away from mid-cell into both cell halves. The protein is Segregation and condensation protein A of Listeria monocytogenes serotype 4a (strain HCC23).